The primary structure comprises 104 residues: Replication restart protein PriB (104 aa).

The SSB domain maps to 1-101 (MTNRLALSGT…LHAEQIELID (101 aa)).

This sequence belongs to the PriB family. In terms of assembly, homodimer. Interacts with PriA and DnaT. Component of the replication restart primosome. Primosome assembly occurs via a 'hand-off' mechanism. PriA binds to replication forks, subsequently PriB then DnaT bind; DnaT then displaces ssDNA to generate the helicase loading substrate.

Its function is as follows. Involved in the restart of stalled replication forks, which reloads the replicative helicase on sites other than the origin of replication; the PriA-PriB pathway is the major replication restart pathway. During primosome assembly it facilitates complex formation between PriA and DnaT on DNA; stabilizes PriA on DNA. Stimulates the DNA unwinding activity of PriA helicase. The chain is Replication restart protein PriB from Citrobacter koseri (strain ATCC BAA-895 / CDC 4225-83 / SGSC4696).